Reading from the N-terminus, the 898-residue chain is Protein translocase subunit SecA (898 aa).

Residues Q87, G105–T109, and D512 each bind ATP. The segment covering M855–S865 has biased composition (polar residues). Residues M855–Y898 form a disordered region. Residues L866–R876 show a composition bias toward basic and acidic residues. Zn(2+)-binding residues include C880, C882, C891, and H892. Residues K886–Y898 show a composition bias toward basic residues.

Belongs to the SecA family. Monomer and homodimer. Part of the essential Sec protein translocation apparatus which comprises SecA, SecYEG and auxiliary proteins SecDF-YajC and YidC. Zn(2+) is required as a cofactor.

The protein localises to the cell inner membrane. It localises to the cytoplasm. It carries out the reaction ATP + H2O + cellular proteinSide 1 = ADP + phosphate + cellular proteinSide 2.. Functionally, part of the Sec protein translocase complex. Interacts with the SecYEG preprotein conducting channel. Has a central role in coupling the hydrolysis of ATP to the transfer of proteins into and across the cell membrane, serving both as a receptor for the preprotein-SecB complex and as an ATP-driven molecular motor driving the stepwise translocation of polypeptide chains across the membrane. The chain is Protein translocase subunit SecA from Histophilus somni (strain 2336) (Haemophilus somnus).